Consider the following 248-residue polypeptide: Large ribosomal subunit protein uL4 (248 aa).

A disordered region spans residues 45–105; it reads PYGADPYAGM…KDQSKSVNTK (61 aa). Over residues 92 to 105 the composition is skewed to basic and acidic residues; that stretch reads PKAEKDQSKSVNTK.

The protein belongs to the universal ribosomal protein uL4 family. As to quaternary structure, part of the 50S ribosomal subunit.

Functionally, one of the primary rRNA binding proteins, this protein initially binds near the 5'-end of the 23S rRNA. It is important during the early stages of 50S assembly. It makes multiple contacts with different domains of the 23S rRNA in the assembled 50S subunit and ribosome. Its function is as follows. Forms part of the polypeptide exit tunnel. The polypeptide is Large ribosomal subunit protein uL4 (Haloquadratum walsbyi (strain DSM 16790 / HBSQ001)).